The primary structure comprises 1064 residues: Carbamoyl phosphate synthase large chain (1064 aa).

Residues 1 to 401 (MPKRNDIKKI…SLLKAVRSLE (401 aa)) are carboxyphosphate synthetic domain. Residues R129, R169, G175, G176, E208, I210, E215, G241, V242, H243, Q284, and E298 each coordinate ATP. In terms of domain architecture, ATP-grasp 1 spans 133 to 327 (KELCESINEP…IAKMSAKIAI (195 aa)). Mg(2+) is bound by residues Q284, E298, and N300. Mn(2+) is bound by residues Q284, E298, and N300. Positions 402-546 (IGVFHNEMTE…YSTYEWENES (145 aa)) are oligomerization domain. Residues 547-929 (KRSDKEKIIV…ALYKSFEAAK (383 aa)) form a carbamoyl phosphate synthetic domain region. The region spanning 671-861 (EKALQDLDIP…MAQLATQMIL (191 aa)) is the ATP-grasp 2 domain. ATP-binding residues include R707, S746, L748, E752, G777, V778, H779, S780, Q820, and E832. Mg(2+) is bound by residues Q820, E832, and N834. 3 residues coordinate Mn(2+): Q820, E832, and N834. Residues 930 to 1064 (LHMADYGSVL…QSRSFTTKNI (135 aa)) form the MGS-like domain. Positions 930 to 1064 (LHMADYGSVL…QSRSFTTKNI (135 aa)) are allosteric domain.

It belongs to the CarB family. Composed of two chains; the small (or glutamine) chain promotes the hydrolysis of glutamine to ammonia, which is used by the large (or ammonia) chain to synthesize carbamoyl phosphate. Tetramer of heterodimers (alpha,beta)4. The cofactor is Mg(2+). Mn(2+) is required as a cofactor.

It catalyses the reaction hydrogencarbonate + L-glutamine + 2 ATP + H2O = carbamoyl phosphate + L-glutamate + 2 ADP + phosphate + 2 H(+). It carries out the reaction hydrogencarbonate + NH4(+) + 2 ATP = carbamoyl phosphate + 2 ADP + phosphate + 2 H(+). Its pathway is amino-acid biosynthesis; L-arginine biosynthesis; carbamoyl phosphate from bicarbonate: step 1/1. It functions in the pathway pyrimidine metabolism; UMP biosynthesis via de novo pathway; (S)-dihydroorotate from bicarbonate: step 1/3. Functionally, large subunit of the glutamine-dependent carbamoyl phosphate synthetase (CPSase). CPSase catalyzes the formation of carbamoyl phosphate from the ammonia moiety of glutamine, carbonate, and phosphate donated by ATP, constituting the first step of 2 biosynthetic pathways, one leading to arginine and/or urea and the other to pyrimidine nucleotides. The large subunit (synthetase) binds the substrates ammonia (free or transferred from glutamine from the small subunit), hydrogencarbonate and ATP and carries out an ATP-coupled ligase reaction, activating hydrogencarbonate by forming carboxy phosphate which reacts with ammonia to form carbamoyl phosphate. The polypeptide is Carbamoyl phosphate synthase large chain (Lactococcus lactis subsp. cremoris (strain SK11)).